A 313-amino-acid chain; its full sequence is Olfactory receptor 10K1 (313 aa).

Over 1 to 25 the chain is Extracellular; that stretch reads MEQVNKTVVREFVVLGFSSLARLQQ. N-linked (GlcNAc...) asparagine glycosylation is present at N5. Residues 26 to 46 traverse the membrane as a helical segment; sequence LLFVIFLLLYLFTLGTNAIII. Over 47 to 54 the chain is Cytoplasmic; the sequence is STIVLDRA. Residues 55–75 traverse the membrane as a helical segment; sequence LHTPMYFFLAILSCSEICYTF. Residues 76–99 lie on the Extracellular side of the membrane; sequence VIVPKMLVDLLSQKKTISFLGCAI. Residues 100–120 form a helical membrane-spanning segment; the sequence is QMFSFLFFGSSHSFLLAAMGY. Over 121-139 the chain is Cytoplasmic; it reads DRYMAICNPLRYSVLMGHG. Residues 140–160 form a helical membrane-spanning segment; the sequence is VCMGLMAAACACGFTVSLVTT. Residues 161–197 are Extracellular-facing; sequence SLVFHLPFHSSNQLHHFFCDISPVLKLASQHSGFSQL. A helical membrane pass occupies residues 198–217; the sequence is VIFMLGVFALVIPLLLILVS. The Cytoplasmic segment spans residues 218 to 237; it reads YIRIISAILKIPSSVGRYKT. The chain crosses the membrane as a helical span at residues 238 to 258; that stretch reads FSTCASHLIVVTVHYSCASFI. Residues 259–271 are Extracellular-facing; sequence YLRPKTNYTSSQD. The N-linked (GlcNAc...) asparagine glycan is linked to N265. Residues 272–292 traverse the membrane as a helical segment; that stretch reads TLISVSYTILTPLFNPMIYSL. Residues 293 to 313 are Cytoplasmic-facing; the sequence is RNKEFKSALRRTIGQTFYPLS.

The protein belongs to the G-protein coupled receptor 1 family.

Its subcellular location is the cell membrane. In terms of biological role, odorant receptor. This is Olfactory receptor 10K1 (OR10K1) from Homo sapiens (Human).